The chain runs to 373 residues: DNA replication and repair protein RecF (373 aa).

Gly30 to Thr37 provides a ligand contact to ATP.

Belongs to the RecF family.

Its subcellular location is the cytoplasm. The RecF protein is involved in DNA metabolism; it is required for DNA replication and normal SOS inducibility. RecF binds preferentially to single-stranded, linear DNA. It also seems to bind ATP. The chain is DNA replication and repair protein RecF from Oenococcus oeni (strain ATCC BAA-331 / PSU-1).